The sequence spans 374 residues: UPF0674 endoplasmic reticulum membrane protein C2G5.01 (374 aa).

Residues 49–68 (FRLEFVILACFFLYVFSFIT) form a helical membrane-spanning segment. N-linked (GlcNAc...) asparagine glycosylation is present at asparagine 287. The disordered stretch occupies residues 335-374 (KAAKKKVKSSGDISKLSESDQKKRMERERQRKMRRRAKKM). Positions 349–363 (KLSESDQKKRMERER) are enriched in basic and acidic residues. The span at 364 to 374 (QRKMRRRAKKM) shows a compositional bias: basic residues.

Belongs to the UPF0674 family.

The protein localises to the endoplasmic reticulum membrane. The sequence is that of UPF0674 endoplasmic reticulum membrane protein C2G5.01 from Schizosaccharomyces pombe (strain 972 / ATCC 24843) (Fission yeast).